A 242-amino-acid chain; its full sequence is Probable transcriptional regulatory protein Bphyt_1301 (242 aa).

It belongs to the TACO1 family.

The protein localises to the cytoplasm. The protein is Probable transcriptional regulatory protein Bphyt_1301 of Paraburkholderia phytofirmans (strain DSM 17436 / LMG 22146 / PsJN) (Burkholderia phytofirmans).